Here is an 80-residue protein sequence, read N- to C-terminus: EMBRYO SURROUNDING FACTOR 1-like protein 1 (80 aa).

The signal sequence occupies residues 1–22; that stretch reads MKSSHIALLCIVVLSLFALHEC. 4 cysteine pairs are disulfide-bonded: cysteine 38–cysteine 52, cysteine 43–cysteine 78, cysteine 50–cysteine 74, and cysteine 53–cysteine 64.

This sequence belongs to the MEG family. As to expression, expressed in leaves.

The sequence is that of EMBRYO SURROUNDING FACTOR 1-like protein 1 (ESFL1) from Arabidopsis thaliana (Mouse-ear cress).